The following is a 263-amino-acid chain: Hydroxyacylglutathione hydrolase (263 aa).

Zn(2+) contacts are provided by His-56, His-58, Asp-60, His-61, His-115, Asp-135, and His-175.

The protein belongs to the metallo-beta-lactamase superfamily. Glyoxalase II family. As to quaternary structure, monomer. It depends on Zn(2+) as a cofactor.

It carries out the reaction an S-(2-hydroxyacyl)glutathione + H2O = a 2-hydroxy carboxylate + glutathione + H(+). Its pathway is secondary metabolite metabolism; methylglyoxal degradation; (R)-lactate from methylglyoxal: step 2/2. Thiolesterase that catalyzes the hydrolysis of S-D-lactoyl-glutathione to form glutathione and D-lactic acid. In Nitrosococcus oceani (strain ATCC 19707 / BCRC 17464 / JCM 30415 / NCIMB 11848 / C-107), this protein is Hydroxyacylglutathione hydrolase.